The sequence spans 65 residues: VESP-VB1 (65 aa).

A signal peptide spans 1–23 (MKMSILFLFALIASLACLQLTFA). AXPX repeat units lie at residues 23-26 (AAPA), 27-30 (ASPL), 31-34 (ANPG), 35-38 (ASPE), 39-42 (AAPL), 43-46 (ADPL), and 47-50 (ADPF). Residues 24 to 49 (APAASPLANPGASPEAAPLADPLADP) constitute a propeptide that is removed on maturation. Leu62 carries the leucine amide modification.

Expressed by the venom gland.

The protein resides in the secreted. Functionally, antimicrobial peptide. Shows activity against both Gram-positive (S.aureus MIC=1.0-3.75 ug/ml) and -negative (E.coli MIC=7.5-15 ug/ml) bacteria, as well against fungi (C.albicans MIC=30 ug/ml). Also promotes important mast cell degranulation. Shows little hemolytic activity on rabbit and human erythrocytes. Its mast cell degranulation activity may be related to the activation of G-protein coupled receptors in mast cells as well as interaction with other proteins located in cell endosomal membranes in the mast cells. This Vespa bicolor (Black shield wasp) protein is VESP-VB1.